We begin with the raw amino-acid sequence, 655 residues long: Probable glucan endo-1,3-beta-glucosidase btgC (655 aa).

2 disordered regions span residues 1–61 and 89–114; these read MSGD…ATPG and SGVD…PGSD. Over 1 to 282 the chain is Cytoplasmic; the sequence is MSGDPRSFSF…PKPGTGSRKR (282 aa). Over residues 19–33 the composition is skewed to polar residues; it reads DSSQQPLHPTNTMAD. The segment covering 89 to 98 has biased composition (basic and acidic residues); that stretch reads SGVDAFRDTD. Residues 283-303 traverse the membrane as a helical; Signal-anchor for type II membrane protein segment; that stretch reads GWIVGIILAVVIVGAIVGGAV. Residues 304 to 655 are Extracellular-facing; it reads GGTLGNREKE…IPDCGGKTAT (352 aa). The interval 305–338 is disordered; that stretch reads GTLGNREKESPSSSETASGDEKVNGDLGKDSDEI. The span at 323–338 shows a compositional bias: basic and acidic residues; sequence GDEKVNGDLGKDSDEI. Asn-426 carries N-linked (GlcNAc...) asparagine glycosylation. Glu-458 serves as the catalytic Proton donor. The active-site Nucleophile is the Glu-557. Residues Asn-576 and Asn-602 are each glycosylated (N-linked (GlcNAc...) asparagine).

It belongs to the glycosyl hydrolase 17 family.

It localises to the cell membrane. The enzyme catalyses Hydrolysis of (1-&gt;3)-beta-D-glucosidic linkages in (1-&gt;3)-beta-D-glucans.. In terms of biological role, glucanases play a role in cell expansion during growth, in cell-cell fusion during mating, and in spore release during sporulation. This enzyme may be involved in beta-glucan degradation. Active on laminarin and lichenan. This chain is Probable glucan endo-1,3-beta-glucosidase btgC (btgC), found in Aspergillus terreus (strain NIH 2624 / FGSC A1156).